Consider the following 395-residue polypeptide: ATP phosphoribosyltransferase regulatory subunit (395 aa).

The protein belongs to the class-II aminoacyl-tRNA synthetase family. HisZ subfamily. Heteromultimer composed of HisG and HisZ subunits.

The protein resides in the cytoplasm. Its pathway is amino-acid biosynthesis; L-histidine biosynthesis; L-histidine from 5-phospho-alpha-D-ribose 1-diphosphate: step 1/9. Required for the first step of histidine biosynthesis. May allow the feedback regulation of ATP phosphoribosyltransferase activity by histidine. This chain is ATP phosphoribosyltransferase regulatory subunit, found in Pseudomonas entomophila (strain L48).